A 119-amino-acid polypeptide reads, in one-letter code: Small ribosomal subunit protein bS6 (119 aa).

The disordered stretch occupies residues 99–119; it reads KKEKKQSRKEEGSENSEKVEE.

It belongs to the bacterial ribosomal protein bS6 family.

Binds together with bS18 to 16S ribosomal RNA. This is Small ribosomal subunit protein bS6 from Thermosipho melanesiensis (strain DSM 12029 / CIP 104789 / BI429).